The primary structure comprises 360 residues: Phospho-N-acetylmuramoyl-pentapeptide-transferase (360 aa).

The next 10 helical transmembrane spans lie at 25–45, 73–93, 97–117, 132–152, 168–188, 199–219, 236–256, 263–283, 288–308, and 339–359; these read RAIL…PWVI, TMGG…WADL, YVLA…VDDY, WKYF…FVTA, VAWQ…VGFS, GLAI…AYLV, SGEL…FLWF, VFMG…IAVI, IVFF…ILQV, and IVRF…TLKI.

The protein belongs to the glycosyltransferase 4 family. MraY subfamily. Mg(2+) serves as cofactor.

It localises to the cell inner membrane. It carries out the reaction UDP-N-acetyl-alpha-D-muramoyl-L-alanyl-gamma-D-glutamyl-meso-2,6-diaminopimeloyl-D-alanyl-D-alanine + di-trans,octa-cis-undecaprenyl phosphate = di-trans,octa-cis-undecaprenyl diphospho-N-acetyl-alpha-D-muramoyl-L-alanyl-D-glutamyl-meso-2,6-diaminopimeloyl-D-alanyl-D-alanine + UMP. It participates in cell wall biogenesis; peptidoglycan biosynthesis. Its function is as follows. Catalyzes the initial step of the lipid cycle reactions in the biosynthesis of the cell wall peptidoglycan: transfers peptidoglycan precursor phospho-MurNAc-pentapeptide from UDP-MurNAc-pentapeptide onto the lipid carrier undecaprenyl phosphate, yielding undecaprenyl-pyrophosphoryl-MurNAc-pentapeptide, known as lipid I. This chain is Phospho-N-acetylmuramoyl-pentapeptide-transferase, found in Teredinibacter turnerae (strain ATCC 39867 / T7901).